We begin with the raw amino-acid sequence, 213 residues long: Pyridoxine/pyridoxamine 5'-phosphate oxidase (213 aa).

Residues 60 to 65 (RMVLMK), 75 to 76 (YS), lysine 82, and glutamine 104 each bind FMN. Lysine 65 contributes to the substrate binding site. Substrate-binding residues include tyrosine 122 and arginine 126. FMN contacts are provided by residues 139–140 (QS) and tryptophan 184. 190 to 192 (RLH) is a substrate binding site. An FMN-binding site is contributed by arginine 194.

The protein belongs to the pyridoxamine 5'-phosphate oxidase family. Homodimer. It depends on FMN as a cofactor.

It carries out the reaction pyridoxamine 5'-phosphate + O2 + H2O = pyridoxal 5'-phosphate + H2O2 + NH4(+). It catalyses the reaction pyridoxine 5'-phosphate + O2 = pyridoxal 5'-phosphate + H2O2. It participates in cofactor metabolism; pyridoxal 5'-phosphate salvage; pyridoxal 5'-phosphate from pyridoxamine 5'-phosphate: step 1/1. Its pathway is cofactor metabolism; pyridoxal 5'-phosphate salvage; pyridoxal 5'-phosphate from pyridoxine 5'-phosphate: step 1/1. Functionally, catalyzes the oxidation of either pyridoxine 5'-phosphate (PNP) or pyridoxamine 5'-phosphate (PMP) into pyridoxal 5'-phosphate (PLP). The polypeptide is Pyridoxine/pyridoxamine 5'-phosphate oxidase (Rhodopseudomonas palustris (strain BisA53)).